Here is a 119-residue protein sequence, read N- to C-terminus: Large ribosomal subunit protein bL12 (119 aa).

This sequence belongs to the bacterial ribosomal protein bL12 family. Homodimer. Part of the ribosomal stalk of the 50S ribosomal subunit. Forms a multimeric L10(L12)X complex, where L10 forms an elongated spine to which 2 to 4 L12 dimers bind in a sequential fashion. Binds GTP-bound translation factors.

Functionally, forms part of the ribosomal stalk which helps the ribosome interact with GTP-bound translation factors. Is thus essential for accurate translation. The chain is Large ribosomal subunit protein bL12 from Colwellia psychrerythraea (strain 34H / ATCC BAA-681) (Vibrio psychroerythus).